The following is a 410-amino-acid chain: MKMEKALNITSEIGKLQTVLVKRPGSELENITPEYLESLLFDDIPYLKMMQKEHDFFVKTMQGSNIEVLYLEKLAAEALRAANNKESFLTKIIKESNQMDESALYVRDYLMSFDEEEMISKLMSGLKKSEIPERKKKHLNEMMDEQYPFFLDPLPNLYFTRDPAAVIGNGVTINKMFQPARRRESMFIELILKHHPRFSNQEIPVWSGREEPFSLEGGDELVLTEETILVGVSERTDARAVERLAESLFSRSPKIKRVLAVEIPETRSFMHLDTVFTMVNYAQFTIHPAIQNQQGELNIYILEKSENGLDITPRRDFKRVIAEVLGEPEVDFIPCGGEDVIVSAREQWNDGANTLAIAPGEVITYDRNQVSNDLLRSAGIKVHEVISSELSRGRGGPRCMTMPLSRENLK.

The active-site Amidino-cysteine intermediate is the C399.

The protein belongs to the arginine deiminase family.

It is found in the cytoplasm. The catalysed reaction is L-arginine + H2O = L-citrulline + NH4(+). The protein operates within amino-acid degradation; L-arginine degradation via ADI pathway; carbamoyl phosphate from L-arginine: step 1/2. This chain is Arginine deiminase, found in Listeria monocytogenes serotype 4a (strain HCC23).